Consider the following 362-residue polypeptide: Oxysterol-binding protein 5 (362 aa).

The protein belongs to the OSBP family.

The protein is Oxysterol-binding protein 5 (osbE) of Dictyostelium discoideum (Social amoeba).